Consider the following 35-residue polypeptide: Ranatuerin-2SPa (35 aa).

C28 and C33 are disulfide-bonded.

As to expression, expressed by the skin glands.

Its subcellular location is the secreted. Antibacterial activity against Gram-positive bacterium S.aureus. Shows no detectable hemolytic activity towards human erythrocytes. The protein is Ranatuerin-2SPa of Lithobates septentrionalis (Mink frog).